The primary structure comprises 265 residues: Mlc titration factor A (265 aa).

Zn(2+) contacts are provided by histidine 111, histidine 148, histidine 152, and glutamate 211.

Belongs to the MtfA family. Interacts with Mlc. Zn(2+) is required as a cofactor.

The protein resides in the cytoplasm. In terms of biological role, involved in the modulation of the activity of the glucose-phosphotransferase system (glucose-PTS). Interacts with the transcriptional repressor Mlc, preventing its interaction with DNA and leading to the modulation of expression of genes regulated by Mlc, including ptsG, which encodes the PTS system glucose-specific EIICB component. Functionally, shows zinc-dependent metallopeptidase activity. This chain is Mlc titration factor A, found in Klebsiella pneumoniae (strain 342).